A 447-amino-acid polypeptide reads, in one-letter code: C4-dicarboxylate transport protein (447 aa).

A run of 10 helical transmembrane segments spans residues 21 to 41 (HLYV…YFAP), 57 to 77 (LVKM…IAGM), 92 to 112 (IYFL…VNIV), 141 to 161 (SLIG…LASG), 163 to 183 (ILQV…VGEA), 201 to 221 (LVAI…AYTV), 232 to 252 (LAML…IVLG), 320 to 340 (IYMT…LSWG), 345 to 365 (LLAV…AGFV), and 368 to 388 (AATL…IFGV).

It belongs to the dicarboxylate/amino acid:cation symporter (DAACS) (TC 2.A.23) family.

It is found in the cell inner membrane. Functionally, responsible for the transport of dicarboxylates such as succinate, fumarate, and malate from the periplasm across the membrane. The sequence is that of C4-dicarboxylate transport protein from Granulibacter bethesdensis (strain ATCC BAA-1260 / CGDNIH1).